Here is a 437-residue protein sequence, read N- to C-terminus: Glutamyl-tRNA reductase (437 aa).

Substrate-binding positions include 49-52 (TCNR), serine 109, 114-116 (ETQ), and glutamine 120. The active-site Nucleophile is the cysteine 50. An NADP(+)-binding site is contributed by 189–194 (GAGEMS).

It belongs to the glutamyl-tRNA reductase family. As to quaternary structure, homodimer.

The enzyme catalyses (S)-4-amino-5-oxopentanoate + tRNA(Glu) + NADP(+) = L-glutamyl-tRNA(Glu) + NADPH + H(+). Its pathway is porphyrin-containing compound metabolism; protoporphyrin-IX biosynthesis; 5-aminolevulinate from L-glutamyl-tRNA(Glu): step 1/2. Catalyzes the NADPH-dependent reduction of glutamyl-tRNA(Glu) to glutamate 1-semialdehyde (GSA). In Listeria welshimeri serovar 6b (strain ATCC 35897 / DSM 20650 / CCUG 15529 / CIP 8149 / NCTC 11857 / SLCC 5334 / V8), this protein is Glutamyl-tRNA reductase.